The following is a 505-amino-acid chain: Protein nucleotidyltransferase YdiU (505 aa).

Glycine 102, glycine 104, arginine 105, lysine 125, aspartate 137, glycine 138, arginine 188, and arginine 195 together coordinate ATP. The Proton acceptor role is filled by aspartate 264. 2 residues coordinate Mg(2+): asparagine 265 and aspartate 274. An ATP-binding site is contributed by aspartate 274. The segment at 485-505 (FADYGKPPAPGEEVQQTFCGT) is disordered.

The protein belongs to the SELO family. It depends on Mg(2+) as a cofactor. The cofactor is Mn(2+).

It catalyses the reaction L-seryl-[protein] + ATP = 3-O-(5'-adenylyl)-L-seryl-[protein] + diphosphate. The enzyme catalyses L-threonyl-[protein] + ATP = 3-O-(5'-adenylyl)-L-threonyl-[protein] + diphosphate. The catalysed reaction is L-tyrosyl-[protein] + ATP = O-(5'-adenylyl)-L-tyrosyl-[protein] + diphosphate. It carries out the reaction L-histidyl-[protein] + UTP = N(tele)-(5'-uridylyl)-L-histidyl-[protein] + diphosphate. It catalyses the reaction L-seryl-[protein] + UTP = O-(5'-uridylyl)-L-seryl-[protein] + diphosphate. The enzyme catalyses L-tyrosyl-[protein] + UTP = O-(5'-uridylyl)-L-tyrosyl-[protein] + diphosphate. Nucleotidyltransferase involved in the post-translational modification of proteins. It can catalyze the addition of adenosine monophosphate (AMP) or uridine monophosphate (UMP) to a protein, resulting in modifications known as AMPylation and UMPylation. In Nitrobacter hamburgensis (strain DSM 10229 / NCIMB 13809 / X14), this protein is Protein nucleotidyltransferase YdiU.